Reading from the N-terminus, the 504-residue chain is uncharacterized protein (504 aa).

Disordered regions lie at residues 1 to 59 (MSSS…KNEY) and 171 to 255 (GVNS…NQRL). Composition is skewed to basic and acidic residues over residues 36–50 (KPIDKEKEKEKKEIG) and 199–212 (RAETPKGRKTESRQ). Residues 213-232 (SNRGNNDNGDQRMTSKATTR) show a composition bias toward polar residues.

This is an uncharacterized protein from Caenorhabditis elegans.